The sequence spans 324 residues: tRNA dimethylallyltransferase (324 aa).

Position 18-25 (18-25 (GPTAVGKT)) interacts with ATP. Residue 20–25 (TAVGKT) participates in substrate binding. The interval 43–46 (DSRQ) is interaction with substrate tRNA.

It belongs to the IPP transferase family. In terms of assembly, monomer. Mg(2+) serves as cofactor.

It catalyses the reaction adenosine(37) in tRNA + dimethylallyl diphosphate = N(6)-dimethylallyladenosine(37) in tRNA + diphosphate. Functionally, catalyzes the transfer of a dimethylallyl group onto the adenine at position 37 in tRNAs that read codons beginning with uridine, leading to the formation of N6-(dimethylallyl)adenosine (i(6)A). This Salinibacter ruber (strain DSM 13855 / M31) protein is tRNA dimethylallyltransferase.